We begin with the raw amino-acid sequence, 1112 residues long: DNA polymerase II large subunit (1112 aa).

This sequence belongs to the archaeal DNA polymerase II family. In terms of assembly, heterodimer of a large subunit and a small subunit.

The enzyme catalyses DNA(n) + a 2'-deoxyribonucleoside 5'-triphosphate = DNA(n+1) + diphosphate. It carries out the reaction Exonucleolytic cleavage in the 3'- to 5'-direction to yield nucleoside 5'-phosphates.. Possesses two activities: a DNA synthesis (polymerase) and an exonucleolytic activity that degrades single-stranded DNA in the 3'- to 5'-direction. Has a template-primer preference which is characteristic of a replicative DNA polymerase. This is DNA polymerase II large subunit from Cenarchaeum symbiosum (strain A).